Reading from the N-terminus, the 476-residue chain is Glycogen synthase (476 aa).

Residue lysine 15 participates in ADP-alpha-D-glucose binding.

The protein belongs to the glycosyltransferase 1 family. Bacterial/plant glycogen synthase subfamily.

The enzyme catalyses [(1-&gt;4)-alpha-D-glucosyl](n) + ADP-alpha-D-glucose = [(1-&gt;4)-alpha-D-glucosyl](n+1) + ADP + H(+). The protein operates within glycan biosynthesis; glycogen biosynthesis. In terms of biological role, synthesizes alpha-1,4-glucan chains using ADP-glucose. This chain is Glycogen synthase, found in Mycoplasma mobile (strain ATCC 43663 / 163K / NCTC 11711) (Mesomycoplasma mobile).